The sequence spans 240 residues: LexA repressor (240 aa).

The H-T-H motif DNA-binding region spans 26–46; that stretch reads FDEMKEALDLASKSGIHRLIT. Residues Ser161 and Lys199 each act as for autocatalytic cleavage activity in the active site.

It belongs to the peptidase S24 family. Homodimer.

The catalysed reaction is Hydrolysis of Ala-|-Gly bond in repressor LexA.. Functionally, represses a number of genes involved in the response to DNA damage (SOS response), including recA and lexA. In the presence of single-stranded DNA, RecA interacts with LexA causing an autocatalytic cleavage which disrupts the DNA-binding part of LexA, leading to derepression of the SOS regulon and eventually DNA repair. This is LexA repressor from Brucella ovis (strain ATCC 25840 / 63/290 / NCTC 10512).